Consider the following 286-residue polypeptide: Plasma membrane ascorbate-dependent reductase CYBRD1 (286 aa).

The Cytoplasmic segment spans residues methionine 1–arginine 7. Residues glycine 8–leucine 32 traverse the membrane as a helical segment. One can recognise a Cytochrome b561 domain in the interval serine 15 to threonine 220. The Extracellular portion of the chain corresponds to histidine 33–phenylalanine 47. Residues asparagine 48–tyrosine 69 form a helical membrane-spanning segment. Residues histidine 50, arginine 70, and lysine 79 each contribute to the heme b site. Topologically, residues arginine 70–serine 78 are cytoplasmic. 2 residues coordinate L-ascorbate: lysine 79 and lysine 83. Residues lysine 79–phenylalanine 105 traverse the membrane as a helical segment. Histidine 86 is a heme b binding site. Topologically, residues aspartate 106 to serine 118 are extracellular. Fe(3+) is bound at residue histidine 108. Heme b contacts are provided by residues histidine 115 to serine 118 and histidine 120. A helical membrane pass occupies residues leucine 119 to leucine 144. Residues proline 145–leucine 151 lie on the Cytoplasmic side of the membrane. Arginine 152 serves as a coordination point for L-ascorbate. The chain crosses the membrane as a helical span at residues arginine 152–threonine 179. Residues histidine 159 and glutamate 180 each contribute to the heme b site. Topologically, residues glutamate 180 to glutamate 197 are extracellular. A helical transmembrane segment spans residues glycine 198–proline 222. At glutamine 223–methionine 286 the chain is on the cytoplasmic side. Lysine 225 contributes to the heme b binding site. Position 232 is a phosphoserine (serine 232). At threonine 285 the chain carries Phosphothreonine.

In terms of assembly, homodimer. Requires heme b as cofactor. As to expression, highly expressed in all regions of the small intestine and colon studied in suckling animals. However, after weaning, when iron absorption declines significantly, strong expression is retained only in the duodenum. Also expressed in respiratory epithelium.

Its subcellular location is the cell membrane. The protein localises to the apical cell membrane. It carries out the reaction Fe(3+)(out) + L-ascorbate(in) = monodehydro-L-ascorbate radical(in) + Fe(2+)(out) + H(+). The enzyme catalyses Cu(2+)(out) + L-ascorbate(in) = Cu(+)(out) + monodehydro-L-ascorbate radical(in) + H(+). The catalysed reaction is monodehydro-L-ascorbate radical(out) + L-ascorbate(in) = monodehydro-L-ascorbate radical(in) + L-ascorbate(out). Functionally, plasma membrane reductase that uses cytoplasmic ascorbate as an electron donor to reduce extracellular Fe(3+) into Fe(2+). Probably functions in dietary iron absorption at the brush border of duodenal enterocytes by producing Fe(2+), the divalent form of iron that can be transported into enterocytes. It is also able to reduce extracellular monodehydro-L-ascorbate and may be involved in extracellular ascorbate regeneration by erythrocytes in blood. May also act as a ferrireductase in airway epithelial cells. May also function as a cupric transmembrane reductase. The sequence is that of Plasma membrane ascorbate-dependent reductase CYBRD1 from Rattus norvegicus (Rat).